The sequence spans 57 residues: UPF0391 membrane protein RPE_2138 (57 aa).

2 helical membrane passes run 4-24 (WVVT…GGIA) and 30-50 (IAKI…VIGL).

Belongs to the UPF0391 family.

The protein localises to the cell membrane. In Rhodopseudomonas palustris (strain BisA53), this protein is UPF0391 membrane protein RPE_2138.